Consider the following 660-residue polypeptide: Probable serine/threonine-protein kinase CE0033 (660 aa).

A Protein kinase domain is found at 9–278; sequence YELGASIGSG…AEMAADLELL (270 aa). Residues 15–23 and Lys38 contribute to the ATP site; that span reads IGSGGMSEV. Catalysis depends on Asp136, which acts as the Proton acceptor. Residues 288 to 319 are disordered; sequence RAHVEKPDEPETVVVPQRLSTPPPPPTPAMPA. PASTA domains follow at residues 377–443, 444–512, and 513–577; these read SAST…TISS, GREV…TVST, and GPSL…EISN.

The protein belongs to the protein kinase superfamily. Ser/Thr protein kinase family.

It catalyses the reaction L-seryl-[protein] + ATP = O-phospho-L-seryl-[protein] + ADP + H(+). The catalysed reaction is L-threonyl-[protein] + ATP = O-phospho-L-threonyl-[protein] + ADP + H(+). The protein is Probable serine/threonine-protein kinase CE0033 of Corynebacterium efficiens (strain DSM 44549 / YS-314 / AJ 12310 / JCM 11189 / NBRC 100395).